The following is a 507-amino-acid chain: Pre-glycoprotein polyprotein GP complex (507 aa).

The N-myristoyl glycine; by host moiety is linked to residue G2. Over 2–17 (GQVVTFLQSLPEVINE) the chain is Extracellular. A helical membrane pass occupies residues 18–33 (AINIALIAISIICILK). Residues 34–58 (GLVNFWKCGVVQLAIFLCLAGRKCD) are Cytoplasmic-facing. Residue C57 coordinates Zn(2+). Residues 59-445 (GLMIDRRHEL…QGKTPIALTD (387 aa)) are Extracellular-facing. 4 disulfide bridges follow: C86–C247, C292–C305, C314–C323, and C377–C398. N89, N111, N179, and N240 each carry an N-linked (GlcNAc...) asparagine; by host glycan. Residues N378, N386, N403, and N408 are each glycosylated (N-linked (GlcNAc...) asparagine; by host). The helical transmembrane segment at 446–466 (ICFWSLVFFTSTVFLQLVGIP) threads the bilayer. Over 467-507 (THRHLVGEGCPKPHRITSNSLCACGYYKIPKRPTRWVRKGK) the chain is Cytoplasmic. Zn(2+) is bound by residues H468, H470, C476, H480, C488, and C490.

It belongs to the arenaviridae GPC protein family. Interacts with glycoprotein G2. Part of the GP complex (GP-C) together with glycoprotein G1 and glycoprotein G2. The GP-complex interacts with protein Z, which interacts with ribonucleocapsid; these interactions may induce virion budding. In terms of assembly, homotrimer; disulfide-linked. In pre-fusion state, G1 homotrimers bind G2 homotrimers via ionic interactions. Part of the GP complex (GP-C) together with glycoprotein G2 and the stable signal peptide. The GP-complex interacts with protein Z, which interacts with ribonucleocapsid; these interactions may induce virion budding. As to quaternary structure, homotrimer. Interacts with the stable signal peptide. In pre-fusion state, G2 homotrimers bind G1 homotrimers via ionic interactions. Part of the GP complex (GP-C) together with glycoprotein G1 and the stable signal peptide. Acidification in the endosome triggers rearrangements, which ultimately leads to a 6 helix bundle formed by the two heptad repeat domains (HR1 and HR2) in post-fusion state. The GP-complex interacts with protein Z, which interacts with ribonucleocapsid; these interactions may induce virion budding. In terms of processing, specific enzymatic cleavages in vivo yield mature proteins. GP-C polyprotein is cleaved in the endoplasmic reticulum by the host protease MBTPS1. Only cleaved glycoprotein is incorporated into virions. Post-translationally, the SSP remains stably associated with the GP complex following cleavage by signal peptidase and plays crucial roles in the trafficking of GP through the secretory pathway. Myristoylation is necessary for GP2-mediated fusion activity.

It is found in the virion membrane. It localises to the host endoplasmic reticulum membrane. The protein resides in the host Golgi apparatus membrane. The protein localises to the host cell membrane. Functionally, functions as a cleaved signal peptide that is retained as the third component of the GP complex (GP-C). Helps to stabilize the spike complex in its native conformation. The SSP is required for efficient glycoprotein expression, post-translational maturation cleavage of G1 and G2, glycoprotein transport to the cell surface plasma membrane, formation of infectious virus particles, and acid pH-dependent glycoprotein-mediated cell fusion. In terms of biological role, forms the virion spikes together with glycoprotein G2. The glycoprotein spike trimers are connected to the underlying matrix. Interacts with the host receptor leading to virus endocytosis. Its function is as follows. Forms the virion spikes together with glycoprotein G1. The glycoprotein spike trimers are connected to the underlying matrix. Class I viral fusion protein that directs fusion of viral and host endosomal membranes, leading to delivery of the nucleocapsid into the cytoplasm. Membrane fusion is mediated by irreversible conformational changes induced by acidification. The chain is Pre-glycoprotein polyprotein GP complex from Allpahuayo mammarenavirus (isolate Rat/Peru/CLHP-2472/1997) (ALLV).